Consider the following 251-residue polypeptide: HTH-type transcriptional regulator UlaR (251 aa).

One can recognise an HTH deoR-type domain in the interval 3–58; that stretch reads EAQRHQILLEMLAQLGFVTVEKVVERLGISPATARRDINKLDESGKLKKVRNGAEA. The segment at residues 20–39 is a DNA-binding region (H-T-H motif); the sequence is VTVEKVVERLGISPATARRD.

Its subcellular location is the cytoplasm. Functionally, represses ulaG and the ulaABCDEF operon. The sequence is that of HTH-type transcriptional regulator UlaR from Escherichia coli O127:H6 (strain E2348/69 / EPEC).